The following is a 1056-amino-acid chain: Isoleucine--tRNA ligase (1056 aa).

Polar residues predominate over residues 1-13 (MCDQGEVSSQNSS). Residues 1-26 (MCDQGEVSSQNSSDYKEQRPTPRPNL) are disordered. Residues 63–73 (PFANGLPHFGH) carry the 'HIGH' region motif. The short motif at 632 to 636 (KASKS) is the 'KMSKS' region element. Lys635 lines the ATP pocket.

The protein belongs to the class-I aminoacyl-tRNA synthetase family. IleS type 2 subfamily. In terms of assembly, monomer. Requires Zn(2+) as cofactor.

The protein localises to the cytoplasm. The catalysed reaction is tRNA(Ile) + L-isoleucine + ATP = L-isoleucyl-tRNA(Ile) + AMP + diphosphate. Catalyzes the attachment of isoleucine to tRNA(Ile). As IleRS can inadvertently accommodate and process structurally similar amino acids such as valine, to avoid such errors it has two additional distinct tRNA(Ile)-dependent editing activities. One activity is designated as 'pretransfer' editing and involves the hydrolysis of activated Val-AMP. The other activity is designated 'posttransfer' editing and involves deacylation of mischarged Val-tRNA(Ile). This is Isoleucine--tRNA ligase from Tropheryma whipplei (strain TW08/27) (Whipple's bacillus).